Reading from the N-terminus, the 350-residue chain is Protein pelota homolog (350 aa).

Belongs to the eukaryotic release factor 1 family. Pelota subfamily. Monomer. A divalent metal cation is required as a cofactor.

It localises to the cytoplasm. Functionally, may function in recognizing stalled ribosomes, interact with stem-loop structures in stalled mRNA molecules, and effect endonucleolytic cleavage of the mRNA. May play a role in the release non-functional ribosomes and degradation of damaged mRNAs. Has endoribonuclease activity. The protein is Protein pelota homolog of Methanosarcina acetivorans (strain ATCC 35395 / DSM 2834 / JCM 12185 / C2A).